Reading from the N-terminus, the 230-residue chain is Ropporin-1-like protein (230 aa).

One can recognise an RIIa domain in the interval 17–46 (PELPDILKQFTKAAIRTQPADVLRWSAGYF).

It belongs to the ropporin family. As to quaternary structure, component of the axonemal radial spoke complex 1 (RS1), at least composed of spoke head proteins RSPH1, RSPH3, RSPH9 and the cilia-specific component RSPH4A or sperm-specific component RSPH6A, spoke stalk proteins RSPH14, DNAJB13, DYDC1, ROPN1L and NME5, and the anchor protein IQUB. Interacts with FSCB; the interaction increases upon spermatozoa capacitation conditions. May interact with AKAP3. Interacts with CFAP61. In terms of processing, sumoylated, sumoylation decreases upon spermatozoa capacitation conditions.

The protein localises to the cell projection. The protein resides in the cilium. Its subcellular location is the flagellum. Its function is as follows. Functions as part of axonemal radial spoke complexes that play an important part in the motility of sperm and cilia. Important for male fertility. With ROPN1, involved in fibrous sheath integrity and sperm motility, plays a role in PKA-dependent signaling processes required for spermatozoa capacitation. This chain is Ropporin-1-like protein (ROPN1L), found in Homo sapiens (Human).